A 151-amino-acid chain; its full sequence is Regulatory protein RecX (151 aa).

It belongs to the RecX family.

Its subcellular location is the cytoplasm. Its function is as follows. Modulates RecA activity. The protein is Regulatory protein RecX of Herminiimonas arsenicoxydans.